The primary structure comprises 250 residues: ATP synthase subunit a (250 aa).

6 helical membrane-spanning segments follow: residues 27–47, 85–105, 115–135, 141–161, 181–201, and 223–243; these read FTNA…FLTF, FFPL…VGLI, LIVT…YGFV, FLHL…LVVI, MLAG…LASA, and ELLV…IYLN.

This sequence belongs to the ATPase A chain family. As to quaternary structure, F-type ATPases have 2 components, CF(1) - the catalytic core - and CF(0) - the membrane proton channel. CF(1) has five subunits: alpha(3), beta(3), gamma(1), delta(1), epsilon(1). CF(0) has three main subunits: a(1), b(2) and c(9-12). The alpha and beta chains form an alternating ring which encloses part of the gamma chain. CF(1) is attached to CF(0) by a central stalk formed by the gamma and epsilon chains, while a peripheral stalk is formed by the delta and b chains.

It localises to the cell inner membrane. Key component of the proton channel; it plays a direct role in the translocation of protons across the membrane. This is ATP synthase subunit a from Xanthobacter autotrophicus (strain ATCC BAA-1158 / Py2).